The chain runs to 409 residues: Glutamyl-tRNA reductase (409 aa).

Residues 48–51 (TCNR), Ser-89, 94–96 (ENE), and Gln-100 each bind substrate. Residue Cys-49 is the Nucleophile of the active site. Position 165 to 170 (165 to 170 (GNGMLA)) interacts with NADP(+).

The protein belongs to the glutamyl-tRNA reductase family. Homodimer.

It carries out the reaction (S)-4-amino-5-oxopentanoate + tRNA(Glu) + NADP(+) = L-glutamyl-tRNA(Glu) + NADPH + H(+). The protein operates within porphyrin-containing compound metabolism; protoporphyrin-IX biosynthesis; 5-aminolevulinate from L-glutamyl-tRNA(Glu): step 1/2. Its function is as follows. Catalyzes the NADPH-dependent reduction of glutamyl-tRNA(Glu) to glutamate 1-semialdehyde (GSA). The chain is Glutamyl-tRNA reductase from Thermoplasma volcanium (strain ATCC 51530 / DSM 4299 / JCM 9571 / NBRC 15438 / GSS1).